The primary structure comprises 141 residues: Large ribosomal subunit protein uL11 (141 aa).

The protein belongs to the universal ribosomal protein uL11 family. In terms of assembly, part of the ribosomal stalk of the 50S ribosomal subunit. Interacts with L10 and the large rRNA to form the base of the stalk. L10 forms an elongated spine to which L12 dimers bind in a sequential fashion forming a multimeric L10(L12)X complex. One or more lysine residues are methylated.

In terms of biological role, forms part of the ribosomal stalk which helps the ribosome interact with GTP-bound translation factors. The protein is Large ribosomal subunit protein uL11 of Streptococcus suis (strain 98HAH33).